A 180-amino-acid chain; its full sequence is D-glycero-beta-D-manno-heptose-1,7-bisphosphate 7-phosphatase (180 aa).

Residue D14 is the Nucleophile of the active site. D14 and D16 together coordinate Mg(2+). Residues D14–D16, N22–Y25, and T56–S59 each bind substrate. D16 serves as the catalytic Proton donor. Zn(2+)-binding residues include C95, H97, C110, and H112. R113–K114 is a binding site for substrate. Position 139 (D139) interacts with Mg(2+).

It belongs to the gmhB family. In terms of assembly, monomer. Mg(2+) serves as cofactor.

Its subcellular location is the cytoplasm. It carries out the reaction D-glycero-beta-D-manno-heptose 1,7-bisphosphate + H2O = D-glycero-beta-D-manno-heptose 1-phosphate + phosphate. Its pathway is nucleotide-sugar biosynthesis; ADP-L-glycero-beta-D-manno-heptose biosynthesis; ADP-L-glycero-beta-D-manno-heptose from D-glycero-beta-D-manno-heptose 7-phosphate: step 2/4. The protein operates within bacterial outer membrane biogenesis; LPS core biosynthesis. Its function is as follows. Converts the D-glycero-beta-D-manno-heptose 1,7-bisphosphate (beta-HBP) intermediate into D-glycero-beta-D-manno-heptose 1-phosphate by removing the phosphate group at the C-7 position. Also catalyzes the dephosphorylation of D-glycero-alpha-D-manno-heptose 1,7-bisphosphate in vitro. The polypeptide is D-glycero-beta-D-manno-heptose-1,7-bisphosphate 7-phosphatase (Rhodopseudomonas palustris (strain ATCC BAA-98 / CGA009)).